Consider the following 458-residue polypeptide: ATP synthase subunit beta (458 aa).

148–155 (GGAGVGKT) is a binding site for ATP.

This sequence belongs to the ATPase alpha/beta chains family. In terms of assembly, F-type ATPases have 2 components, CF(1) - the catalytic core - and CF(0) - the membrane proton channel. CF(1) has five subunits: alpha(3), beta(3), gamma(1), delta(1), epsilon(1). CF(0) has three main subunits: a(1), b(2) and c(9-12). The alpha and beta chains form an alternating ring which encloses part of the gamma chain. CF(1) is attached to CF(0) by a central stalk formed by the gamma and epsilon chains, while a peripheral stalk is formed by the delta and b chains.

The protein resides in the cell inner membrane. It carries out the reaction ATP + H2O + 4 H(+)(in) = ADP + phosphate + 5 H(+)(out). In terms of biological role, produces ATP from ADP in the presence of a proton gradient across the membrane. The catalytic sites are hosted primarily by the beta subunits. This chain is ATP synthase subunit beta, found in Shewanella woodyi (strain ATCC 51908 / MS32).